Reading from the N-terminus, the 88-residue chain is Translation initiation factor IF-1 1 (88 aa).

The region spanning 1–72 (MAKEELIELD…TKGRINFRHK (72 aa)) is the S1-like domain.

It belongs to the IF-1 family. Component of the 30S ribosomal translation pre-initiation complex which assembles on the 30S ribosome in the order IF-2 and IF-3, IF-1 and N-formylmethionyl-tRNA(fMet); mRNA recruitment can occur at any time during PIC assembly.

Its subcellular location is the cytoplasm. One of the essential components for the initiation of protein synthesis. Stabilizes the binding of IF-2 and IF-3 on the 30S subunit to which N-formylmethionyl-tRNA(fMet) subsequently binds. Helps modulate mRNA selection, yielding the 30S pre-initiation complex (PIC). Upon addition of the 50S ribosomal subunit IF-1, IF-2 and IF-3 are released leaving the mature 70S translation initiation complex. In Burkholderia mallei (strain ATCC 23344), this protein is Translation initiation factor IF-1 1.